The chain runs to 132 residues: Small ribosomal subunit protein uS8 (132 aa).

In terms of assembly, part of the 30S ribosomal subunit. Contacts proteins S5 and S12. Post-translationally, a modified and unmodified form exist; the nature of the modification(s) is unknown.

In terms of biological role, one of the primary rRNA binding proteins, it binds directly to 16S rRNA central domain where it helps coordinate assembly of the platform of the 30S subunit. The sequence is that of Small ribosomal subunit protein uS8 from Rhodopseudomonas palustris (strain ATCC BAA-98 / CGA009).